The chain runs to 251 residues: Guanine nucleotide-binding protein subunit gamma 3 (251 aa).

The segment covering 1 to 10 has biased composition (gly residues); that stretch reads MSAPSGGGEG. The interval 1–44 is disordered; the sequence is MSAPSGGGEGGGKESAAGGVSSSSLAPSSLPPPRPKSPPEYPDL. Residues 14–28 are compositionally biased toward low complexity; it reads ESAAGGVSSSSLAPS. Over residues 29–41 the composition is skewed to pro residues; sequence SLPPPRPKSPPEY. The region spanning 46–126 is the G protein gamma domain; the sequence is GKRREAARVQ…LSLVSFCCCC (81 aa). At C248 the chain carries Cysteine methyl ester. Residue C248 is the site of S-farnesyl cysteine attachment. Positions 249 to 251 are cleaved as a propeptide — removed in mature form; that stretch reads LAF.

As to quaternary structure, g proteins are composed of 3 units, alpha, beta and gamma. As to expression, expressed in flowers and siliques.

Its function is as follows. Guanine nucleotide-binding proteins (G proteins) are involved as a modulator or transducer in various transmembrane signaling systems. The beta and gamma chains are required for the GTPase activity, for replacement of GDP by GTP, and for G protein-effector interaction. In Arabidopsis thaliana (Mouse-ear cress), this protein is Guanine nucleotide-binding protein subunit gamma 3 (GG3).